A 504-amino-acid polypeptide reads, in one-letter code: Deoxyguanosinetriphosphate triphosphohydrolase (504 aa).

The 208-residue stretch at 66-273 (RLTHSLEVQQ…MEAADDISYC (208 aa)) folds into the HD domain.

It belongs to the dGTPase family. Type 1 subfamily. In terms of assembly, homotetramer. It depends on Mg(2+) as a cofactor.

The enzyme catalyses dGTP + H2O = 2'-deoxyguanosine + triphosphate + H(+). Functionally, dGTPase preferentially hydrolyzes dGTP over the other canonical NTPs. The polypeptide is Deoxyguanosinetriphosphate triphosphohydrolase (Klebsiella pneumoniae subsp. pneumoniae (strain ATCC 700721 / MGH 78578)).